We begin with the raw amino-acid sequence, 171 residues long: UPF0316 protein Exig_2248 (171 aa).

Helical transmembrane passes span isoleucine 4–methionine 24, isoleucine 31–valine 51, and threonine 57–valine 77.

The protein belongs to the UPF0316 family.

It is found in the cell membrane. The polypeptide is UPF0316 protein Exig_2248 (Exiguobacterium sibiricum (strain DSM 17290 / CCUG 55495 / CIP 109462 / JCM 13490 / 255-15)).